A 362-amino-acid polypeptide reads, in one-letter code: sn-glycerol-3-phosphate import ATP-binding protein UgpC (362 aa).

The ABC transporter domain maps to 4–235 (LTLQSVKKTY…PATVFVASFI (232 aa)). 37-44 (GPSGCGKS) is a binding site for ATP.

This sequence belongs to the ABC transporter superfamily. sn-glycerol-3-phosphate importer (TC 3.A.1.1.3) family. In terms of assembly, the complex is composed of two ATP-binding proteins (UgpC), two transmembrane proteins (UgpA and UgpE) and a solute-binding protein (UgpB).

It is found in the cell inner membrane. The catalysed reaction is sn-glycerol 3-phosphate(out) + ATP + H2O = sn-glycerol 3-phosphate(in) + ADP + phosphate + H(+). In terms of biological role, part of the ABC transporter complex UgpBAEC involved in sn-glycerol-3-phosphate (G3P) import. Responsible for energy coupling to the transport system. This Paraburkholderia xenovorans (strain LB400) protein is sn-glycerol-3-phosphate import ATP-binding protein UgpC.